Here is a 90-residue protein sequence, read N- to C-terminus: DNA-directed RNA polymerase subunit omega (90 aa).

The segment at 69–90 (RQEQQEQEAAELAAVSSIAHTR) is disordered.

It belongs to the RNA polymerase subunit omega family. In terms of assembly, the RNAP catalytic core consists of 2 alpha, 1 beta, 1 beta' and 1 omega subunit. When a sigma factor is associated with the core the holoenzyme is formed, which can initiate transcription.

It catalyses the reaction RNA(n) + a ribonucleoside 5'-triphosphate = RNA(n+1) + diphosphate. In terms of biological role, promotes RNA polymerase assembly. Latches the N- and C-terminal regions of the beta' subunit thereby facilitating its interaction with the beta and alpha subunits. This Vibrio atlanticus (strain LGP32) (Vibrio splendidus (strain Mel32)) protein is DNA-directed RNA polymerase subunit omega.